The sequence spans 413 residues: Ferredoxin--NADP reductase (413 aa).

Methionine 1 is modified (N-acetylmethionine). Residues 18–76 (NRLFVYEVIGLSQSTMTDGLDYPIRRSGSTFITVPLKRMNQEMRRITRMGGKIVSIKPL) enclose the CpcD-like domain. The disordered stretch occupies residues 74 to 120 (KPLEGDSPLPHTEGIAKPSQSEGSGSEAVANPAPESNKTMTTTPKEK). The span at 107–116 (PESNKTMTTT) shows a compositional bias: polar residues. One can recognise an FAD-binding FR-type domain in the interval 133–256 (KTPYIGKVLE…TGPVGKEMLL (124 aa)). Residues 192–195 (RLYS), 213–215 (CVR), tyrosine 219, 230–232 (VCS), and threonine 271 each bind FAD. Residues serine 195 and arginine 215 each contribute to the NADP(+) site. Residues threonine 271, 303–304 (IP), 333–334 (SR), 343–347 (RMYIQ), 372–373 (GL), and glutamate 411 contribute to the NADP(+) site.

The protein belongs to the ferredoxin--NADP reductase type 1 family. In terms of assembly, purifies with both the classic phycobilisome (PBS) supercomplex (CpcG-PBS) and a photosystem I-associated PBS called CpcL-PBS; it accumulates to a higher level in CpcL-PBS. In both PBS it can be cross-linked to both phycocyanin subunits. The cofactor is FAD. In terms of processing, acetylated at the N-terminus; 6% of protein in CpcG-PBS and 12% of protein in CpcL-PBS is acetylated.

Its subcellular location is the cellular thylakoid membrane. The catalysed reaction is 2 reduced [2Fe-2S]-[ferredoxin] + NADP(+) + H(+) = 2 oxidized [2Fe-2S]-[ferredoxin] + NADPH. The sequence is that of Ferredoxin--NADP reductase from Synechocystis sp. (strain ATCC 27184 / PCC 6803 / Kazusa).